Consider the following 897-residue polypeptide: MPKVLFQKYKKVVSNIDPSRYSAKFKEIDEQRRSQGSESDFADEMEGEFEAEMEEMGSSEFSLSEGEPSLNIGKIDLSFPETVEEFENSPQCYPPSYYTLSPKERLLLLYAENFRKQLVLSYPKRRAMVLALPNECKVQKFVCTTIRPTAFIYTQLISSVEEIAKFVADFIQYEPLQDPINLPNRLISPETLLRKRKGNSYEMATLLVSMLIGAGHPALVVSGVAREETILNDQLAVPYPYPIVEVEVEEVKPKVEKPGQKYKLRGLPDLKSHLEEDMAEVHRQKEAEEKRIQDEIIRKQMEDLELLAVDRYHYRRSHAWVVIINNAPWSVKPKTTYTDVNGDVVEAPPTAIFIEPSTGFICETGCKQYILVDSIWNEYNYYVCKQKHQRVSELRWDLRDTKDWEHMLPGEPPEMRIYKMASDENVADEERDISEEKHLDCIGSWVERLHIGLADFEQRFPSSEKKIQYKGAIHERFSPYSQRDGKVMQLTIFNNDECTIPKVRYEYYENRSDLMRHVKYTYATDQFEEIFNKGRNDSLKSIEYFSDPSQQRKVHFFSASRIDSLELMVVEPGSLILHYKDRSDKCWYKEFEFTPAGNVLKKVTEKFLKASANDVCSNDIATRTFLFQQNKIVLKFHYTFGALTATVVEFTKPPRPDYGKELIYDEKLTKIYKANPLDPTRTNLELYRLLCEQLQYEDHLRKNFEKIFEDINNVFDLRKSEKAEPKLKFSIFDPLRNGAARAIRMRQFEEEEELKKEIASKPADFLAPYLVPYKHQEELTPEQSQNAYNACLNDLKSRFVSLLNNLQRHYEDLTSESKSLNRFLNKFENQFNNYDYKRLVQQSKDLELNKRMVQQRLTLTHEESQKKYEVVKNSLLKDPRLNFKKDDLARRASETSK.

The segment at 27-49 (EIDEQRRSQGSESDFADEMEGEF) is disordered. The span at 40–49 (DFADEMEGEF) shows a compositional bias: acidic residues. 2 coiled-coil regions span residues 269–306 (DLKSHLEEDMAEVHRQKEAEEKRIQDEIIRKQMEDLEL) and 801–858 (SLLN…QRLT).

This sequence belongs to the DRC7 family. In terms of tissue distribution, testis-specific (at protein level).

It localises to the cell projection. The protein resides in the cilium. The protein localises to the flagellum. It is found in the cytoplasm. Its subcellular location is the cytoskeleton. It localises to the cilium axoneme. Its function is as follows. Key component of the nexin-dynein regulatory complex (N-DRC), essential for N-DRC integrity. Involved in the regulation of flagellar motility. Involved in sperm motility. Required for the sperm to enter in the coiled storage seminal receptacle (SR) tubule. This chain is Coiled-coil domain-containing protein lobo (lobo), found in Drosophila melanogaster (Fruit fly).